The sequence spans 220 residues: Fructose-6-phosphate aldolase (220 aa).

The active-site Schiff-base intermediate with substrate is lysine 85.

Belongs to the transaldolase family. Type 3A subfamily. In terms of assembly, homodecamer.

The protein localises to the cytoplasm. The enzyme catalyses beta-D-fructose 6-phosphate = dihydroxyacetone + D-glyceraldehyde 3-phosphate. In terms of biological role, catalyzes the reversible formation of fructose 6-phosphate from dihydroxyacetone and D-glyceraldehyde 3-phosphate via an aldolization reaction. The protein is Fructose-6-phosphate aldolase of Salmonella typhi.